Consider the following 146-residue polypeptide: Anti-sigma F factor (146 aa).

Belongs to the anti-sigma-factor family.

It catalyses the reaction L-seryl-[protein] + ATP = O-phospho-L-seryl-[protein] + ADP + H(+). The catalysed reaction is L-threonyl-[protein] + ATP = O-phospho-L-threonyl-[protein] + ADP + H(+). Binds to sigma F and blocks its ability to form an RNA polymerase holoenzyme (E-sigma F). Phosphorylates SpoIIAA on a serine residue. This phosphorylation may enable SpoIIAA to act as an anti-anti-sigma factor that counteracts SpoIIAB and thus releases sigma F from inhibition. This is Anti-sigma F factor from Bacillus licheniformis.